The sequence spans 90 residues: Small ribosomal subunit protein uS15 (90 aa).

The protein belongs to the universal ribosomal protein uS15 family. Part of the 30S ribosomal subunit. Forms a bridge to the 50S subunit in the 70S ribosome, contacting the 23S rRNA.

Its function is as follows. One of the primary rRNA binding proteins, it binds directly to 16S rRNA where it helps nucleate assembly of the platform of the 30S subunit by binding and bridging several RNA helices of the 16S rRNA. In terms of biological role, forms an intersubunit bridge (bridge B4) with the 23S rRNA of the 50S subunit in the ribosome. The chain is Small ribosomal subunit protein uS15 from Campylobacter jejuni subsp. jejuni serotype O:6 (strain 81116 / NCTC 11828).